A 497-amino-acid chain; its full sequence is Beta-glucosidase 8 (497 aa).

The first 22 residues, methionine 1–alanine 22, serve as a signal peptide directing secretion. Glutamine 42 lines the a beta-D-glucoside pocket. The N-linked (GlcNAc...) asparagine glycan is linked to asparagine 65. Residues histidine 139 and asparagine 184–glutamate 185 contribute to the a beta-D-glucoside site. The active-site Proton donor is the glutamate 185. Asparagine 202 carries N-linked (GlcNAc...) asparagine glycosylation. Tyrosine 319 lines the a beta-D-glucoside pocket. Residue asparagine 354 is glycosylated (N-linked (GlcNAc...) asparagine). A beta-D-glucoside contacts are provided by glutamate 387, tryptophan 430, and phenylalanine 446. The Nucleophile role is filled by glutamate 387. Residues asparagine 452, asparagine 474, and asparagine 490 are each glycosylated (N-linked (GlcNAc...) asparagine).

Belongs to the glycosyl hydrolase 1 family.

The catalysed reaction is Hydrolysis of terminal, non-reducing beta-D-glucosyl residues with release of beta-D-glucose.. In Arabidopsis thaliana (Mouse-ear cress), this protein is Beta-glucosidase 8.